The chain runs to 307 residues: Phosphonates import ATP-binding protein PhnC (307 aa).

The region spanning 4–252 (IRIERLSKTF…RLHALYGDDA (249 aa)) is the ABC transporter domain. Residue 37–44 (GASGSGKS) coordinates ATP. The segment covering 265-275 (AAREAAGEPAR) has biased composition (basic and acidic residues). The interval 265 to 307 (AAREAAGEPARRAPAAFDSAGSPDLPDSQPASPRRMLAASSMR) is disordered.

The protein belongs to the ABC transporter superfamily. Phosphonates importer (TC 3.A.1.9.1) family. The complex is composed of two ATP-binding proteins (PhnC), two transmembrane proteins (PhnE) and a solute-binding protein (PhnD).

It is found in the cell inner membrane. It carries out the reaction phosphonate(out) + ATP + H2O = phosphonate(in) + ADP + phosphate + H(+). In terms of biological role, part of the ABC transporter complex PhnCDE involved in phosphonates import. Responsible for energy coupling to the transport system. The protein is Phosphonates import ATP-binding protein PhnC of Burkholderia pseudomallei (strain 1710b).